The primary structure comprises 620 residues: LysM domain receptor-like kinase 3 (620 aa).

Residues 1–23 (MNLKNGLLLFILFLDCVFFKVES) form the signal peptide. Over 24–231 (KCVKGCDVAL…YSRTGIAKGS (208 aa)) the chain is Extracellular. 3 disulfides stabilise this stretch: cysteine 25-cysteine 92, cysteine 29-cysteine 154, and cysteine 90-cysteine 152. The N-linked (GlcNAc...) asparagine glycan is linked to asparagine 46. The 27-residue stretch at 46-72 (NISNFMQSKIVLTNSFDVIMSYNRDVV) folds into the LysM 1; degenerate domain. LysM domains lie at 102–148 (FEYT…KINV) and 167–210 (VTYP…VFIP). Residues 108 to 114 (EGDDYDL) and 136 to 142 (DPNHIPV) each bind chitin. Asparagine 147 and asparagine 199 each carry an N-linked (GlcNAc...) asparagine glycan. A helical membrane pass occupies residues 232–252 (AVGIAMAGIFGLLLFVIYIYA). Residues 253–620 (KYFQKKEEEK…QSLINLLSTR (368 aa)) are Cytoplasmic-facing. Residues 265–278 (LPQTSRAFSTQDAS) are compositionally biased toward polar residues. The interval 265–292 (LPQTSRAFSTQDASGSAEYETSGSSGHA) is disordered. Serine 269 and serine 273 each carry phosphoserine. One can recognise a Protein kinase domain in the interval 322-595 (FSLDNKIGQG…RSIVVALMTL (274 aa)). Residues 328–336 (IGQGGFGAV) and lysine 349 each bind ATP. Aspartate 441 serves as the catalytic Proton acceptor.

Belongs to the protein kinase superfamily. Ser/Thr protein kinase family. Forms homodimers and homooligomers. Forms heteromeric complexes with NFP at the cell periphery in nodules. Interacts with PUB1. In terms of processing, autophosphorylated. As to expression, expressed in the epidermal and root hair cells of the developing root hair zone during nonsymbiotic growth. Accumulates in roots and nodules during symbiotic growth with rhizobia. Localized at the cell periphery in a narrow zone of about two cell layers (e.g. L1/L2 zone) at the nodule apex upon infection by rhizobia, from the meristem to the infection zone (at protein level).

The protein resides in the cell membrane. It localises to the vacuole lumen. It catalyses the reaction L-seryl-[protein] + ATP = O-phospho-L-seryl-[protein] + ADP + H(+). It carries out the reaction L-threonyl-[protein] + ATP = O-phospho-L-threonyl-[protein] + ADP + H(+). Its function is as follows. Putative receptor for S.meliloti Nod factor signals essential for the establishment of the nitrogen-fixing, root nodule symbiosis with S.meliloti. Involved in the control of root hair curling after S.meliloti infection, probably by modulating the reorganization of the microtubular cytoskeleton in epidermal and cortical cells. Regulates a subset of Nod factor-induced genes. The sequence is that of LysM domain receptor-like kinase 3 from Medicago truncatula (Barrel medic).